The sequence spans 124 residues: Small ribosomal subunit protein uS12 (124 aa).

The segment covering 11–20 (GRKRLKKKSK) has biased composition (basic residues). Residues 11 to 30 (GRKRLKKKSKSPALENNPQK) are disordered. The residue at position 89 (Asp-89) is a 3-methylthioaspartic acid. Residues 105 to 124 (EGVANRRQSRSRYGAKKPKK) form a disordered region. Residues 111 to 124 (RQSRSRYGAKKPKK) are compositionally biased toward basic residues.

Belongs to the universal ribosomal protein uS12 family. As to quaternary structure, part of the 30S ribosomal subunit. Contacts proteins S8 and S17. May interact with IF1 in the 30S initiation complex.

Its function is as follows. With S4 and S5 plays an important role in translational accuracy. In terms of biological role, interacts with and stabilizes bases of the 16S rRNA that are involved in tRNA selection in the A site and with the mRNA backbone. Located at the interface of the 30S and 50S subunits, it traverses the body of the 30S subunit contacting proteins on the other side and probably holding the rRNA structure together. The combined cluster of proteins S8, S12 and S17 appears to hold together the shoulder and platform of the 30S subunit. This chain is Small ribosomal subunit protein uS12, found in Kosmotoga olearia (strain ATCC BAA-1733 / DSM 21960 / TBF 19.5.1).